The following is a 103-amino-acid chain: Large ribosomal subunit protein bL21 (103 aa).

The protein belongs to the bacterial ribosomal protein bL21 family. As to quaternary structure, part of the 50S ribosomal subunit. Contacts protein L20.

This protein binds to 23S rRNA in the presence of protein L20. This is Large ribosomal subunit protein bL21 from Mycobacterium leprae (strain Br4923).